Consider the following 361-residue polypeptide: Aminomethyltransferase (361 aa).

The protein belongs to the GcvT family. As to quaternary structure, the glycine cleavage system is composed of four proteins: P, T, L and H.

The catalysed reaction is N(6)-[(R)-S(8)-aminomethyldihydrolipoyl]-L-lysyl-[protein] + (6S)-5,6,7,8-tetrahydrofolate = N(6)-[(R)-dihydrolipoyl]-L-lysyl-[protein] + (6R)-5,10-methylene-5,6,7,8-tetrahydrofolate + NH4(+). In terms of biological role, the glycine cleavage system catalyzes the degradation of glycine. The polypeptide is Aminomethyltransferase (Herpetosiphon aurantiacus (strain ATCC 23779 / DSM 785 / 114-95)).